The chain runs to 295 residues: Zygote arrest protein 1.S (295 aa).

Disordered stretches follow at residues 80–115 (SVQCSLGPRTLLRRRPGALRKPPPEQGSPASPTKTV) and 144–186 (EKGE…APAQ). Residues 144 to 176 (EKGEAVRSEGSEGGRQEGKQGDGEIKEQMKMDK) show a composition bias toward basic and acidic residues. The 3CxxC-type zinc-finger motif lies at 197-280 (KYGYYHCKDC…RQDLCGRCKG (84 aa)).

This sequence belongs to the ZAR1 family. In terms of tissue distribution, ovary. Also expressed in lung and muscle.

It is found in the cytoplasm. The protein resides in the cytoplasmic ribonucleoprotein granule. In terms of biological role, mRNA-binding protein required for maternal mRNA storage, translation and degradation during oocyte maturation. Probably promotes formation of some phase-separated membraneless compartment that stores maternal mRNAs in oocytes: acts by undergoing liquid-liquid phase separation upon binding to maternal mRNAs. Binds to the 3'-UTR of maternal mRNAs in immature oocytes, inhibiting their translation. The sequence is that of Zygote arrest protein 1.S (zar1.S) from Xenopus laevis (African clawed frog).